The following is a 211-amino-acid chain: Large ribosomal subunit protein uL3 (211 aa).

Positions 126-147 are disordered; sequence HGQSRGPMAHGSRYHRRPGSMG.

This sequence belongs to the universal ribosomal protein uL3 family. As to quaternary structure, part of the 50S ribosomal subunit. Forms a cluster with proteins L14 and L19.

In terms of biological role, one of the primary rRNA binding proteins, it binds directly near the 3'-end of the 23S rRNA, where it nucleates assembly of the 50S subunit. This is Large ribosomal subunit protein uL3 from Geobacillus thermodenitrificans (strain NG80-2).